Consider the following 340-residue polypeptide: MIILAIESSCDETGVGIADLRDDGTVTLLADEVASSVDEHARFGGVVPEIASRAHLEALGPTMRRALDAAGIERPDVVAATIGPGLAGALLVGVAAAKAYAAGWGVPFYGVNHLGGHLAADVYDHGPLPESVGLLVSGGHTHLLHVRSLGEPIIELGSTVDDAAGEAYDKVARLLGLGYPGGRVLDELARTGDRDAIVFPRGMTGPRDDPYTFSFSGLKTAVARYVEAHPEASHADVAAGFQESVADVLTAKAVRAATDLGVSTLLIAGGVAANSRLRELAEERCAAAGLTLRVPRPRLCTDNGAMIASFAAHLIAAGAQPSPLDAASDPGLPVVKGQVA.

Residues H113 and H117 each coordinate Fe cation. Substrate-binding positions include 135–139, D169, G182, D186, and N274; that span reads LVSGG. D302 contributes to the Fe cation binding site.

The protein belongs to the KAE1 / TsaD family. It depends on Fe(2+) as a cofactor.

It localises to the cytoplasm. The catalysed reaction is L-threonylcarbamoyladenylate + adenosine(37) in tRNA = N(6)-L-threonylcarbamoyladenosine(37) in tRNA + AMP + H(+). Its function is as follows. Required for the formation of a threonylcarbamoyl group on adenosine at position 37 (t(6)A37) in tRNAs that read codons beginning with adenine. Is involved in the transfer of the threonylcarbamoyl moiety of threonylcarbamoyl-AMP (TC-AMP) to the N6 group of A37, together with TsaE and TsaB. TsaD likely plays a direct catalytic role in this reaction. This is tRNA N6-adenosine threonylcarbamoyltransferase from Mycolicibacterium smegmatis (strain ATCC 700084 / mc(2)155) (Mycobacterium smegmatis).